We begin with the raw amino-acid sequence, 264 residues long: Ubiquinone biosynthesis protein COQ4 homolog, mitochondrial (264 aa).

The N-terminal 26 residues, 1–26 (MMQRCWQISLPLARRRLIPSLTSKRT), are a transit peptide targeting the mitochondrion. Zn(2+)-binding residues include His-169, Asp-170, His-173, and Glu-185.

This sequence belongs to the COQ4 family. In terms of assembly, component of a multi-subunit COQ enzyme complex. The cofactor is Zn(2+).

Its subcellular location is the mitochondrion inner membrane. The catalysed reaction is a 4-hydroxy-3-methoxy-5-(all-trans-polyprenyl)benzoate + H(+) = a 2-methoxy-6-(all-trans-polyprenyl)phenol + CO2. It functions in the pathway cofactor biosynthesis; ubiquinone biosynthesis. Its function is as follows. Lyase that catalyzes the C1-decarboxylation of 4-hydroxy-3-methoxy-5-(all-trans-polyprenyl)benzoic acid into 2-methoxy-6-(all-trans-polyprenyl)phenol during ubiquinone biosynthesis. The protein is Ubiquinone biosynthesis protein COQ4 homolog, mitochondrial of Drosophila grimshawi (Hawaiian fruit fly).